Here is a 185-residue protein sequence, read N- to C-terminus: uncharacterized protein (185 aa).

The Cytoplasmic segment spans residues 1 to 69; that stretch reads MSSFIDSIKS…SSDCSRAERT (69 aa). A helical transmembrane segment spans residues 70–90; sequence FNLILFAIVDLVICCESMAFF. Position 91 (N91) is a topological domain, extracellular. The chain crosses the membrane as a helical span at residues 92 to 112; it reads LLLKLPSMLLVSFLTMLVFSI. Residues 113–118 are Cytoplasmic-facing; sequence SYSWSA. A helical transmembrane segment spans residues 119–139; sequence FNWISFAFSSASFLMKACILF. At 140 to 185 the chain is on the extracellular side; it reads NSSFTWFGVKAVIAEDMLYRMVRGLFCASFVKQLQTTFLATAIVLC.

It is found in the membrane. This is an uncharacterized protein from Saccharomyces cerevisiae (strain ATCC 204508 / S288c) (Baker's yeast).